We begin with the raw amino-acid sequence, 283 residues long: Diaminopimelate epimerase (283 aa).

3 residues coordinate substrate: Asn13, Gln46, and Asn66. Cys75 (proton donor) is an active-site residue. Residues 76–77 (GN), Asn166, Asn199, and 217–218 (ER) each bind substrate. Cys226 functions as the Proton acceptor in the catalytic mechanism. 227–228 (GT) serves as a coordination point for substrate.

This sequence belongs to the diaminopimelate epimerase family. Homodimer.

It localises to the cytoplasm. The catalysed reaction is (2S,6S)-2,6-diaminopimelate = meso-2,6-diaminopimelate. Its pathway is amino-acid biosynthesis; L-lysine biosynthesis via DAP pathway; DL-2,6-diaminopimelate from LL-2,6-diaminopimelate: step 1/1. Its function is as follows. Catalyzes the stereoinversion of LL-2,6-diaminopimelate (L,L-DAP) to meso-diaminopimelate (meso-DAP), a precursor of L-lysine and an essential component of the bacterial peptidoglycan. The chain is Diaminopimelate epimerase from Herminiimonas arsenicoxydans.